Reading from the N-terminus, the 398-residue chain is Acetate kinase 1 (398 aa).

Asparagine 9 contacts Mg(2+). ATP is bound at residue lysine 16. Arginine 89 contacts substrate. The Proton donor/acceptor role is filled by aspartate 146. Residues 206 to 210, 281 to 283, and 329 to 333 each bind ATP; these read HLGNG, DCR, and GIGEN. Glutamate 384 provides a ligand contact to Mg(2+).

The protein belongs to the acetokinase family. As to quaternary structure, homodimer. Requires Mg(2+) as cofactor. It depends on Mn(2+) as a cofactor.

It localises to the cytoplasm. It catalyses the reaction acetate + ATP = acetyl phosphate + ADP. The protein operates within metabolic intermediate biosynthesis; acetyl-CoA biosynthesis; acetyl-CoA from acetate: step 1/2. In terms of biological role, catalyzes the formation of acetyl phosphate from acetate and ATP. Can also catalyze the reverse reaction. The protein is Acetate kinase 1 of Vibrio parahaemolyticus serotype O3:K6 (strain RIMD 2210633).